The sequence spans 264 residues: 4-hydroxy-tetrahydrodipicolinate reductase (264 aa).

8-13 (GPRGNM) is a binding site for NAD(+). Position 36 (K36) interacts with NADP(+). NAD(+) contacts are provided by residues 97 to 99 (GTT) and 123 to 126 (APNF). H153 serves as the catalytic Proton donor/acceptor. (S)-2,3,4,5-tetrahydrodipicolinate is bound at residue H154. K157 (proton donor) is an active-site residue. A (S)-2,3,4,5-tetrahydrodipicolinate-binding site is contributed by 163 to 164 (GT).

The protein belongs to the DapB family.

The protein resides in the cytoplasm. The enzyme catalyses (S)-2,3,4,5-tetrahydrodipicolinate + NAD(+) + H2O = (2S,4S)-4-hydroxy-2,3,4,5-tetrahydrodipicolinate + NADH + H(+). The catalysed reaction is (S)-2,3,4,5-tetrahydrodipicolinate + NADP(+) + H2O = (2S,4S)-4-hydroxy-2,3,4,5-tetrahydrodipicolinate + NADPH + H(+). The protein operates within amino-acid biosynthesis; L-lysine biosynthesis via DAP pathway; (S)-tetrahydrodipicolinate from L-aspartate: step 4/4. In terms of biological role, catalyzes the conversion of 4-hydroxy-tetrahydrodipicolinate (HTPA) to tetrahydrodipicolinate. The sequence is that of 4-hydroxy-tetrahydrodipicolinate reductase from Shouchella clausii (strain KSM-K16) (Alkalihalobacillus clausii).